Reading from the N-terminus, the 775-residue chain is MASLIYRQLLTNSYSVDLHDEIEQIGSEKTQNVTINPGPFAQTRYAPVNWGHGEINDSTTVEPILDGPYQSTTFTPPNGYWILINSNTNGVVYESTNNSDFWTAVVAIEPHVNPVDRQYTIFGESKQFNVSNDSNKWKFLEMFRSSSQNDFYNRRTLTSDTRLVGILKYGGRVWTFHGETPRATTNGSSTANLNNISITIHSEFYIIPRSQESKCNEYINNGLPPIQNTRNVVPLPLSSRSIQYKRAQVNEDIIVSKTSLWKEMQYNRDIIIRFKFGNSIVKMGGLGYKWSEISYKVANYQYNYLRDGEQVTAHTTCSVNGVNNFSYNGGSLPTDFGISRYEVIKENSYVYVDYWDDSKAFRNMVYVRSLAANLNSVKCTGGSYAFSIPVGAWPIMNGGAVSLHFAGVTLSTQFTDFVSLNSLRFRFSLTVDEPPFSILRTRTVNLYGLPAANPNNGNEYYEISGRFSLISLVSTNDDYQTPIMNSVTVRQDLERQLTDLREEFNSLSQEIAMAQLIDLALLPLDMFSMFSGIKSTIDLTKSMATSVMKKFRKSKLATSISEMTNSLSDAASSASRNVSIRSNLSAISNWTNVSNDVSNVTNSLNDISTQTSTISKKLRLKEMITQTEGMSFDDISAAVLKTKIDMSTQIGKNTLPDIVTEASEKFIPKRSYRILKDDEVMEINTEGKFFAYKINTFDEVPFDVNKFAELVTDSPVISAIIDFKTLKNLNDNYGITRTEALNLIKSNPNMLRNFINQNNPIIRNRIEQLILQCKL.

The segment at 65–223 (LDGPYQSTTF…KCNEYINNGL (159 aa)) is spike head. The spike body and stalk (antigen domain) stretch occupies residues 247 to 478 (AQVNEDIIVS…LISLVSTNDD (232 aa)). The short motif at 307–309 (DGE) is the DGE motif; interaction with ITGA2/ITGB1 heterodimer element. Cys317 and Cys379 form a disulfide bridge. Positions 388-408 (IPVGAWPIMNGGAVSLHFAGV) are hydrophobic; possible role in virus entry into host cell. The YGL motif; interaction with ITGA4 motif lies at 447–449 (YGL). Residues 483–517 (IMNSVTVRQDLERQLTDLREEFNSLSQEIAMAQLI) are a coiled coil. Residues 509 to 775 (QEIAMAQLID…IEQLILQCKL (267 aa)) are spike foot. The KID motif; interaction with HSPA8 motif lies at 643–645 (KID).

Belongs to the rotavirus VP4 family. In terms of assembly, homotrimer. VP4 adopts a dimeric appearance above the capsid surface, while forming a trimeric base anchored inside the capsid layer. Only hints of the third molecule are observed above the capsid surface. It probably performs a series of molecular rearrangements during viral entry. Prior to trypsin cleavage, it is flexible. The priming trypsin cleavage triggers its rearrangement into rigid spikes with approximate two-fold symmetry of their protruding parts. After an unknown second triggering event, cleaved VP4 may undergo another rearrangement, in which two VP5* subunits fold back on themselves and join a third subunit to form a tightly associated trimer, shaped like a folded umbrella. Interacts with VP6. Interacts with VP7. As to quaternary structure, homotrimer. The trimer is coiled-coil stabilized by its C-terminus, however, its N-terminus, known as antigen domain or 'body', seems to be flexible allowing it to self-associate either as a dimer or a trimer. Post-translationally, proteolytic cleavage by trypsin results in activation of VP4 functions and greatly increases infectivity. The penetration into the host cell is dependent on trypsin treatment of VP4. It produces two peptides, VP5* and VP8* that remain associated with the virion. Cleavage of VP4 by trypsin probably occurs in vivo in the lumen of the intestine prior to infection of enterocytes. Trypsin seems to be incorporated into the three-layered viral particles but remains inactive as long as the viral outer capsid is intact and would only be activated upon the solubilization of the latter.

The protein localises to the virion. Its subcellular location is the host rough endoplasmic reticulum. It is found in the host cell membrane. The protein resides in the host cytoplasm. It localises to the host cytoskeleton. The protein localises to the host endoplasmic reticulum-Golgi intermediate compartment. Spike-forming protein that mediates virion attachment to the host epithelial cell receptors and plays a major role in cell penetration, determination of host range restriction and virulence. Rotavirus attachment and entry into the host cell probably involves multiple sequential contacts between the outer capsid proteins VP4 and VP7, and the cell receptors. It is subsequently lost, together with VP7, following virus entry into the host cell. Following entry into the host cell, low intracellular or intravesicular Ca(2+) concentration probably causes the calcium-stabilized VP7 trimers to dissociate from the virion. This step is probably necessary for the membrane-disrupting entry step and the release of VP4, which is locked onto the virion by VP7. During the virus exit from the host cell, VP4 seems to be required to target the newly formed virions to the host cell lipid rafts. Functionally, forms the spike 'foot' and 'body' and acts as a membrane permeabilization protein that mediates release of viral particles from endosomal compartments into the cytoplasm. During entry, the part of VP5* that protrudes from the virus folds back on itself and reorganizes from a local dimer to a trimer. This reorganization may be linked to membrane penetration by exposing VP5* hydrophobic region. In integrin-dependent strains, VP5* targets the integrin heterodimer ITGA2/ITGB1 for cell attachment. In terms of biological role, forms the head of the spikes and mediates the recognition of specific host cell surface glycans. It is the viral hemagglutinin and an important target of neutralizing antibodies. In sialic acid-dependent strains, VP8* binds to host cell sialic acid, most probably a ganglioside, providing the initial contact. In some other strains, VP8* mediates the attachment to histo-blood group antigens (HBGAs) for viral entry. This is Outer capsid protein VP4 from Rotavirus A (strain RVA/Human/United States/D/1974/G1P1A[8]) (RV-A).